The primary structure comprises 158 residues: 18.1 kDa class I heat shock protein (158 aa).

A sHSP domain is found at 44 to 158; the sequence is ENPAFVSTRV…AEVKSIEISG (115 aa).

It belongs to the small heat shock protein (HSP20) family. As to quaternary structure, forms oligomeric structures.

It is found in the cytoplasm. The chain is 18.1 kDa class I heat shock protein (HSP18.1) from Pisum sativum (Garden pea).